The primary structure comprises 96 residues: Integration host factor subunit beta (96 aa).

Belongs to the bacterial histone-like protein family. Heterodimer of an alpha and a beta chain.

This protein is one of the two subunits of integration host factor, a specific DNA-binding protein that functions in genetic recombination as well as in transcriptional and translational control. The sequence is that of Integration host factor subunit beta from Photobacterium profundum (strain SS9).